Consider the following 52-residue polypeptide: Proteinase inhibitor PSI-1.2 (52 aa).

4 disulfide bridges follow: Cys-3–Cys-32, Cys-7–Cys-28, Cys-16–Cys-38, and Cys-31–Cys-49.

Functionally, potent inhibitor of trypsin and a weaker inhibitor of chymotrypsin. It does not inhibit elastase and subtilisin DY. This Capsicum annuum (Capsicum pepper) protein is Proteinase inhibitor PSI-1.2.